Consider the following 440-residue polypeptide: Tuliposide B-converting enzyme 1, amyloplastic (440 aa).

Residues 1 to 58 (MSIVSFCSSLPAGPHGFKHGRGTRDMVHMPCIVRRTARSPAQACRLLRWNKYHCAAVP) constitute an amyloplast transit peptide. Catalysis depends on Ser232, which acts as the Acyl-ester intermediate. Residues Asp325 and His357 each act as charge relay system in the active site.

Belongs to the AB hydrolase superfamily. In terms of assembly, homodimer. Not glycosylated. As to expression, expressed in the pollen grains.

The protein localises to the plastid. It is found in the amyloplast. It carries out the reaction 6-tuliposide B = tulipalin B + D-glucose. With respect to regulation, inhibited by Ag(+), Cu(2+), Fe(2+), Hg(2+), V(3+) and phenylmethylsulfonyl fluoride (PMSF). In terms of biological role, lactone-forming carboxylesterase, specifically catalyzing intramolecular transesterification, but not hydrolysis. Involved in the biosynthesis of tulipalins, defensive chemicals that show antimicrobial activities against a broad range of strains of bacteria and fungi. Substrates are 6-tuliposide B &gt; 6-tuliposide A. The chain is Tuliposide B-converting enzyme 1, amyloplastic from Tulipa gesneriana (Garden tulip).